Reading from the N-terminus, the 95-residue chain is MADDKPKEGVKTENNDHINLKVAGQDGSVVQFKIKRHTPLNKLMKAYCERQGLSMRQIRFRFDGQPINETDTPAQLEMEDEDTIDVFQQQTGGSY.

Residue K11 forms a Glycyl lysine isopeptide (Lys-Gly) (interchain with G-Cter in SUMO) linkage. The Ubiquitin-like domain occupies 16 to 95 (DHINLKVAGQ…VFQQQTGGSY (80 aa)). G93 participates in a covalent cross-link: Glycyl lysine isopeptide (Gly-Lys) (interchain with K-? in acceptor proteins). Residues 94–95 (SY) constitute a propeptide that is removed on maturation.

It belongs to the ubiquitin family. SUMO subfamily. In terms of assembly, interacts with sae2 and ube2i. Covalently attached to a number of proteins, including top2. In terms of processing, polymeric chains can be formed through Lys-11 cross-linking. Post-translationally, cleavage of precursor form by a sentrin-specific protease is necessary for function.

The protein localises to the nucleus. Ubiquitin-like protein that can be covalently attached to proteins as a monomer or as a lysine-linked polymer. Covalent attachment via an isopeptide bond to its substrates requires prior activation by the E1 complex sae1-sae2 and linkage to the E2 enzyme ube2i, and can be promoted by an E3 ligase such as pias1-4. This post-translational modification on lysine residues of proteins plays a crucial role in a number of cellular processes such as nuclear transport, DNA replication and repair, mitosis and signal transduction. Polymeric sumo2 chains are also susceptible to polyubiquitination which functions as a signal for proteasomal degradation of modified proteins. The protein is Small ubiquitin-related modifier 2-B (sumo2-b) of Xenopus laevis (African clawed frog).